The sequence spans 35 residues: Photosystem II reaction center protein T (35 aa).

The chain crosses the membrane as a helical span at residues 3–23 (ALVYTFLLVSTLGIIFFAIFF).

Belongs to the PsbT family. PSII is composed of 1 copy each of membrane proteins PsbA, PsbB, PsbC, PsbD, PsbE, PsbF, PsbH, PsbI, PsbJ, PsbK, PsbL, PsbM, PsbT, PsbY, PsbZ, Psb30/Ycf12, at least 3 peripheral proteins of the oxygen-evolving complex and a large number of cofactors. It forms dimeric complexes.

It localises to the plastid. Its subcellular location is the chloroplast thylakoid membrane. Functionally, found at the monomer-monomer interface of the photosystem II (PS II) dimer, plays a role in assembly and dimerization of PSII. PSII is a light-driven water plastoquinone oxidoreductase, using light energy to abstract electrons from H(2)O, generating a proton gradient subsequently used for ATP formation. This Cycas revoluta (Sago palm) protein is Photosystem II reaction center protein T.